Consider the following 237-residue polypeptide: N-alpha-acetyltransferase 40 (237 aa).

Residue G2 is the site of N-myristoyl glycine attachment. The N-acetyltransferase domain maps to 63 to 216 (SGLEPATVDW…EDCSYEILSR (154 aa)). Substrate contacts are provided by residues Y85, 127–129 (DVE), and Y138. Residues 140-142 (VQL) and 148-153 (RKGLGK) each bind acetyl-CoA. T174 contacts substrate. N179 serves as a coordination point for acetyl-CoA. The substrate site is built by S197 and Y211.

This sequence belongs to the acetyltransferase family. NAA40 subfamily.

The protein resides in the cytoplasm. It is found in the nucleus. The catalysed reaction is N-terminal L-seryl-[histone H4] + acetyl-CoA = N-terminal N(alpha)-acetyl-L-seryl-[histone H4] + CoA + H(+). The enzyme catalyses N-terminal L-seryl-[histone H2A] + acetyl-CoA = N-terminal N(alpha)-acetyl-L-seryl-[histone H2A] + CoA + H(+). Functionally, N-alpha-acetyltransferase that specifically mediates the acetylation of the N-terminal residues of histones H4 and H2A. In contrast to other N-alpha-acetyltransferase, has a very specific selectivity for histones H4 and H2A N-terminus and specifically recognizes the 'Ser-Gly-Arg-Gly sequence'. Acts as a negative regulator of apoptosis. May play a role in hepatic lipid metabolism. The polypeptide is N-alpha-acetyltransferase 40 (Mus musculus (Mouse)).